The following is a 199-amino-acid chain: Probable GTP-binding protein EngB (199 aa).

An EngB-type G domain is found at 28–199 (DIPEIALAGR…QAWDAILEQI (172 aa)). GTP contacts are provided by residues 36-43 (GRSNVGKS), 63-67 (GKTQL), 81-84 (DVPG), 148-151 (TKAD), and 180-182 (FSS). Mg(2+)-binding residues include Ser-43 and Thr-65.

It belongs to the TRAFAC class TrmE-Era-EngA-EngB-Septin-like GTPase superfamily. EngB GTPase family. Requires Mg(2+) as cofactor.

Necessary for normal cell division and for the maintenance of normal septation. This is Probable GTP-binding protein EngB from Streptococcus uberis (strain ATCC BAA-854 / 0140J).